The following is a 280-amino-acid chain: Thioesterase pynI (280 aa).

The segment covering 136-145 (LADDSDDEDN) has biased composition (acidic residues). Residues 136–167 (LADDSDDEDNRSDASDASDDGSTMSDEEEEDD) form a disordered region.

It belongs to the AMT4 thioesterase family.

The protein operates within secondary metabolite biosynthesis. Its function is as follows. Thioesterase; part of the gene cluster that mediates the biosynthesis of pyranonigrins, a family of antioxidative compounds. The first step of pyranonigrins biosynthesis is performed by the hybrid PKS-NRPS synthetase that condenses 6 malonyl-CoA units to an acetyl starter unit, to form a 1,3,5-trioxotetradecane-6,8-dienyl-ACP. The enoyl reductase (ER) domain of pynA is likely to be functional during the first two rounds of polyketide chain extension, to generate the saturated C-C bonds of the alkyl side chain. PynA subsequently forms the amide bond between the acyl chain and L-serine. Although pynA has a terminal reductase domain, it appears to require the thioesterase pynI for the release of the straight-chain intermediate from pynA via the formation of a tetramic acid pyranonigrin J. The methyltransferase pynC then coverts pyranonigrin J to pyranonigrin I via N-methylation. The FAD-dependent monooxygenase pynG catalyzes an epoxidation-mediated cyclization to form the dihydro-gamma-pyrone moiety, followed by pynD-catalyzed oxidation of the alcohol to the ketone and enolization to yield the characteristic tetramic acid-fused gamma-pyrone core of pyranonigrin H. Pyranonigrin H is substrate of pynH for dehydration-mediated exo-methylene formation from the serine side chain to produce pyranonigrin E, before the oxidase pynE reduces the exo-methylene of pyranonigrin E into a pendant methyl to form pyranonigrin G. The FAD-linked oxidoreductase pynB performs the reverse reaction and converts pyranonigrin G back to pyranonigrin E. This Aspergillus niger (strain ATCC MYA-4892 / CBS 513.88 / FGSC A1513) protein is Thioesterase pynI.